Here is a 195-residue protein sequence, read N- to C-terminus: Nucleoside triphosphate pyrophosphatase (195 aa).

Asp-70 serves as the catalytic Proton acceptor.

The protein belongs to the Maf family. A divalent metal cation is required as a cofactor.

It is found in the cytoplasm. It catalyses the reaction a ribonucleoside 5'-triphosphate + H2O = a ribonucleoside 5'-phosphate + diphosphate + H(+). It carries out the reaction a 2'-deoxyribonucleoside 5'-triphosphate + H2O = a 2'-deoxyribonucleoside 5'-phosphate + diphosphate + H(+). Its function is as follows. Nucleoside triphosphate pyrophosphatase. May have a dual role in cell division arrest and in preventing the incorporation of modified nucleotides into cellular nucleic acids. In Microcystis aeruginosa (strain NIES-843 / IAM M-2473), this protein is Nucleoside triphosphate pyrophosphatase.